Here is a 662-residue protein sequence, read N- to C-terminus: ATP-dependent RNA helicase DDX3X (662 aa).

An N-acetylserine modification is found at Ser-2. Positions Ser-2–Pro-139 are required for TBK1 and IKBKE-dependent IFNB1 activation. Positions Leu-12–Leu-21 match the Nuclear export signal motif. The tract at residues Leu-19–Glu-144 is disordered. Residues Leu-21–Ser-34 are compositionally biased toward polar residues. The interval Tyr-38–Arg-44 is interaction with EIF4E. Residues Arg-44–Ala-68 are compositionally biased toward basic and acidic residues. Residue Lys-55 is modified to N6-acetyllysine. The segment covering Ser-70–Gly-89 has biased composition (low complexity). The segment at Lys-81–Ser-90 is interaction with VACV protein K7. A phosphoserine mark is found at Ser-82, Ser-86, and Ser-90. Residues Arg-88–Gly-123 are involved in binding to RNA G-quadruplex. Over residues Gly-94 to Lys-130 the composition is skewed to basic and acidic residues. Positions Gly-100–Arg-110 are interaction with IKBKE. The segment at Gly-100–Asn-662 is interaction with GSK3B. Residue Arg-101 is modified to Omega-N-methylarginine. A Phosphoserine; by IKKE modification is found at Ser-102. Tyr-104 carries the post-translational modification Phosphotyrosine. Residue Arg-110 is modified to Omega-N-methylarginine. Lys-118 bears the N6-acetyllysine mark. Ser-131 bears the Phosphoserine mark. Residues Pro-139–Gly-172 are interaction with CHUK. A Q motif motif is present at residues Glu-180 to Lys-208. Ser-181 carries the post-translational modification Phosphoserine; by TBK1; in vitro. At Ser-183 the chain carries Phosphoserine; by TBK1. Tyr-200–Gln-207 contacts ATP. The Helicase ATP-binding domain maps to Ile-211–Leu-403. A Glycyl lysine isopeptide (Lys-Gly) (interchain with G-Cter in SUMO2) cross-link involves residue Lys-215. Ala-224–Thr-231 lines the ATP pocket. The residue at position 240 (Ser-240) is a Phosphoserine; by TBK1; in vitro. Residues Ala-250 to Arg-259 form an involved in stimulation of ATPase activity by DNA and RNA, nucleic acid binding and unwinding and HIV-1 replication region. Ser-269 carries the post-translational modification Phosphoserine; by TBK1; in vitro. A DEAD box motif is present at residues Asp-347 to Asp-350. The tract at residues Gly-409–Asn-662 is interaction with HCV core protein. The Helicase C-terminal domain maps to Asn-414–Ala-575. Ser-429 carries the phosphoserine; by CSNK1E and TBK1; in vitro modification. Thr-438 carries the phosphothreonine; by TBK1; in vitro modification. Residues Ser-442 and Ser-456 each carry the phosphoserine; by TBK1; in vitro modification. Phosphothreonine; by CSNK1E; in vitro is present on Thr-469. Residue Ser-470 is modified to Phosphoserine; by CSNK1E; in vitro. Ser-520 is modified (phosphoserine; by TBK1; in vitro). The interval Gly-536 to Gly-661 is interaction with NXF1. Thr-542 is modified (phosphothreonine; by TBK1; in vitro). Ser-543 is modified (phosphoserine; by CSNK1E and TBK1; in vitro). Arg-592 is modified (omega-N-methylarginine). Phosphoserine occurs at positions 594, 605, and 612. The tract at residues Asp-601 to Phe-634 is disordered. Positions Gln-604–Arg-622 are enriched in low complexity. 2 positions are modified to omega-N-methylarginine: Arg-617 and Arg-632. Residues Ser-623–Phe-634 are compositionally biased toward gly residues.

It belongs to the DEAD box helicase family. DDX3/DED1 subfamily. Homodimer; can bind RNA as a monomer and as a dimer/oligomer. Interacts with TDRD3. Interacts (when phosphorylated at Ser-102) with IRF3; the interaction facilitates the phosphorylation and activation of IRF3 by IKBKE. Directly interacts with XPO1/CRM1. The interaction with XPO1/CMR1 is dependent on the DDX3X nuclear export signal motif and XPO1 interaction with GTPase RAN in its active GTP-bound form. Weakly interacts with TBKBP1/SINTBAD. Directly interacts with TRAF3; this interaction stimulates TRAF3 'Lys-63' ubiquitination. Interacts with CSNK1E in a Wnt-dependent manner; this interaction greatly enhances CSNK1E affinity for ATP, stimulates its kinase activity and promotes CSNK1E-mediated DVL2 phosphorylation. In the presence of RNA, the interaction is decreased. Also interacts with CSNK1D and stimulates its kinase activity. Interacts with TRPV4; this interaction is decreased when the TRPV4 channel is activated, leading to DDX3X relocalization to the nucleus. Interacts with MAP3K14/NIK. Directly interacts with CHUK/IKKA after physiological activation of the TLR7 and TLR8 pathways; this interaction enhances CHUK autophosphorylation. May associate with EIF4F complex, composed of at least EIF4A, EIF4E and EIF4G1/EIF4G3. Directly interacts with EIF4E in an RNA-independent manner; this interaction enhances EIF4E cap-binding ability. Directly interacts with EIF4G1 in an RNA-independent manner. DDX3X competes with EIF4G1 for interaction with EIF4E. Interacts with EIF4A1 and EIF2S1 in an RNA-independent manner. Associates with the eukaryotic translation initiation factor 3 (eIF-3) complex, including with EIF3B and EIF3C subunits. Directly interacts with IKBKE/IKKE; this interaction stimulates IKBKE activating autophosphorylation and is induced upon viral infection. Interacts with TBK1. Interacts with SP1; this interaction potentiates SP1-induced CDKN1A/WAF1/CIP1 transcription. Interacts with GSK3A and GSK3B. Interacts with several death receptors, inclusing FAS, TNFRSF10A and TNFRSF10B. Recruited to TNFRSF10B in the absence of receptor stimulation. When TNFRSF10B is stimulated, further recruited to the receptor and cleaved by caspases. A large proteolytic fragment remains associated with TNFRSF10B. Interacts (via C-terminus) with NXF1/TAP; this interaction may be partly involved in DDX3X nuclear export and in NXF1 localization to stress granules. Identified in an mRNP complex, composed of at least DHX9, DDX3X, ELAVL1, HNRNPU, IGF2BP1/2, ILF3, PABPC1, PCBP2, PTBP2, STAU1, STAU2, SYNCRIP and YBX1. The interaction with IGF2BP1/2 is RNA-dependent. Directly interacts with PABPC1/PABP1 in an RNA-independent manner. This interaction increases in stressed cells and decreases during cell recovery. Interacts (via C-terminus) with MAVS/IPS-1; this interaction occurs rapidly, but transiently after Sendai virus infection. The interaction potentiates MAVS-mediated IFNB induction. Interacts with ERCC6/CBS. Interacts with DHX33 in an RNA-independent manner. Interacts with DDX5 in the cytoplasm; this interaction may be more efficient when both proteins are unphosphorylated. Interacts with RIGI/RIG-1. Interacts with IFIH1/MDA5. Interacts with NCAPH; this interaction may be important for the NCAPH localization at condensing chromosomes during mitosis. Interacts with NLRP3 (via NACHT domain) under inflammasome-activating conditions. Interacts with CAPRIN1. Interacts with HNF4A and NR0B2/SHP in an RNA-independent manner; this interaction disrupts the interaction between HNF4 and NR0B2 that forms inactive heterodimers and enhances the formation of active HNF4 homodimers. Interacts with CREBBP/CBP. Interacts with EP300/p300. Interacts with gamma-tubulin. Interacts with phosphorylated TP53. Directly interacts with RELA/p65; this interaction may trap RELA in the cytoplasm, impairing nuclear relocalization upon TNF activating signals. As to quaternary structure, (Microbial infection) Interacts with hepatitis B virus (HBV) polymerase in the cytoplasm; this interaction may inhibit DDX3X interaction with the IKBKE/TBK1 complex, and hence impair IKBKE/TBK1-mediated increase in IFNB production. In terms of assembly, (Microbial infection) Directly interacts with hepatitis C virus (HCV) core protein in the cytoplasm. (Microbial infection) Interacts with vaccinia virus (VACV) protein K7. As to quaternary structure, (Microbial infection) Interacts with HIV-1 protein Rev. In terms of assembly, (Microbial infection) Interacts with Venezuelan equine encephalitis virus non-structural protein 3. In terms of processing, phosphorylated by TBK1; the phosphorylation is required for the synergistic induction of IFNB mediated by TBK1 and DDX3X. Phosphorylated by IKBKE at Ser-102 after ssRNA viral infection; enhances the induction of INFB promoter by IRF3. The cytoplasmic form is highly phosphorylated in the G1/S phase of the cell cycle and much less at G2/M. Phosphorylation by CSNK1E may inhibit RNA-stimulated ATPase activity. Upon stimulation of death receptors, including TNFRSF10B, recruited to receptors and cleaved by caspases. Proteolytic fragments remain associated with the receptors. This cleavage presumably inactivates DDX3X anti-apoptotic function. Post-translationally, ubiquitinated by RNF39 via 'Lys-48'-linked ubiquitination; leading to proteasomal degradation. Widely expressed. In testis, expressed in spermatids. Expressed in epidermis and liver (at protein level).

The protein localises to the cell membrane. It localises to the nucleus. Its subcellular location is the cytoplasm. It is found in the stress granule. The protein resides in the inflammasome. The protein localises to the cell projection. It localises to the lamellipodium. Its subcellular location is the cytoskeleton. It is found in the microtubule organizing center. The protein resides in the centrosome. It carries out the reaction ATP + H2O = ADP + phosphate + H(+). In terms of biological role, multifunctional ATP-dependent RNA helicase. The ATPase activity can be stimulated by various ribo-and deoxynucleic acids indicative for a relaxed substrate specificity. In vitro can unwind partially double-stranded DNA with a preference for 5'-single-stranded DNA overhangs. Binds RNA G-quadruplex (rG4s) structures, including those located in the 5'-UTR of NRAS mRNA. Involved in many cellular processes, which do not necessarily require its ATPase/helicase catalytic activities. Involved in transcription regulation. Positively regulates CDKN1A/WAF1/CIP1 transcription in an SP1-dependent manner, hence inhibits cell growth. This function requires its ATPase, but not helicase activity. CDKN1A up-regulation may be cell-type specific. Binds CDH1/E-cadherin promoter and represses its transcription. Potentiates HNF4A-mediated MTTP transcriptional activation; this function requires ATPase, but not helicase activity. Facilitates HNF4A acetylation, possibly catalyzed by CREBBP/EP300, thereby increasing the DNA-binding affinity of HNF4 to its response element. In addition, disrupts the interaction between HNF4 and SHP that forms inactive heterodimers and enhances the formation of active HNF4 homodimers. By promoting HNF4A-induced MTTP expression, may play a role in lipid homeostasis. May positively regulate TP53 transcription. Associates with mRNPs, predominantly with spliced mRNAs carrying an exon junction complex (EJC). Involved in the regulation of translation initiation. Not involved in the general process of translation, but promotes efficient translation of selected complex mRNAs, containing highly structured 5'-untranslated regions (UTR). This function depends on helicase activity. Might facilitate translation by resolving secondary structures of 5'-UTRs during ribosome scanning. Alternatively, may act prior to 43S ribosomal scanning and promote 43S pre-initiation complex entry to mRNAs exhibiting specific RNA motifs, by performing local remodeling of transcript structures located close to the cap moiety. Independently of its ATPase activity, promotes the assembly of functional 80S ribosomes and disassembles from ribosomes prior to the translation elongation process. Positively regulates the translation of cyclin E1/CCNE1 mRNA and consequently promotes G1/S-phase transition during the cell cycle. May activate TP53 translation. Required for endoplasmic reticulum stress-induced ATF4 mRNA translation. Independently of its ATPase/helicase activity, enhances IRES-mediated translation; this activity requires interaction with EIF4E. Independently of its ATPase/helicase activity, has also been shown specifically repress cap-dependent translation, possibly by acting on translation initiation factor EIF4E. Involved in innate immunity, acting as a viral RNA sensor. Binds viral RNAs and promotes the production of type I interferon (IFN-alpha and IFN-beta). Potentiate MAVS/RIGI-mediated induction of IFNB in early stages of infection. Enhances IFNB1 expression via IRF3/IRF7 pathway and participates in NFKB activation in the presence of MAVS and TBK1. Involved in TBK1 and IKBKE-dependent IRF3 activation leading to IFNB induction, acts as a scaffolding adapter that links IKBKE and IRF3 and coordinates their activation. Involved in the TLR7/TLR8 signaling pathway leading to type I interferon induction, including IFNA4 production. In this context, acts as an upstream regulator of IRF7 activation by MAP3K14/NIK and CHUK/IKKA. Stimulates CHUK autophosphorylation and activation following physiological activation of the TLR7 and TLR8 pathways, leading to MAP3K14/CHUK-mediated activatory phosphorylation of IRF7. Also stimulates MAP3K14/CHUK-dependent NF-kappa-B signaling. Negatively regulates TNF-induced IL6 and IL8 expression, via the NF-kappa-B pathway. May act by interacting with RELA/p65 and trapping it in the cytoplasm. May also bind IFNB promoter; the function is independent of IRF3. Involved in both stress and inflammatory responses. Independently of its ATPase/helicase activity, required for efficient stress granule assembly through its interaction with EIF4E, hence promotes survival in stressed cells. Independently of its helicase activity, regulates NLRP3 inflammasome assembly through interaction with NLRP3 and hence promotes cell death by pyroptosis during inflammation. This function is independent of helicase activity. Therefore DDX3X availability may be used to interpret stress signals and choose between pro-survival stress granules and pyroptotic NLRP3 inflammasomes and serve as a live-or-die checkpoint in stressed cells. In association with GSK3A/B, negatively regulates extrinsic apoptotic signaling pathway via death domain receptors, including TNFRSF10B, slowing down the rate of CASP3 activation following death receptor stimulation. Cleavage by caspases may inactivate DDX3X and relieve the inhibition. Independently of its ATPase/helicase activity, allosteric activator of CSNK1E. Stimulates CSNK1E-mediated phosphorylation of DVL2, thereby involved in the positive regulation of Wnt/beta-catenin signaling pathway. Also activates CSNK1A1 and CSNK1D in vitro, but it is uncertain if these targets are physiologically relevant. ATPase and casein kinase-activating functions are mutually exclusive. May be involved in mitotic chromosome segregation. (Microbial infection) Facilitates hepatitis C virus (HCV) replication. During infection, HCV core protein inhibits the interaction between MAVS and DDX3X and therefore impairs MAVS-dependent INFB induction and might recruit DDX3X to HCV replication complex. Functionally, (Microbial infection) Facilitates HIV-1 replication. Acts as a cofactor for XPO1-mediated nuclear export of HIV-1 Rev RNAs. This function is strongly stimulated in the presence of TBK1 and requires DDX3X ATPase activity. Its function is as follows. (Microbial infection) Facilitates Zika virus (ZIKV) replication. In terms of biological role, (Microbial infection) Facilitates Dengue virus (DENV) replication. (Microbial infection) Facilitates Venezuelan equine encephalitis virus (VEEV) replication. The polypeptide is ATP-dependent RNA helicase DDX3X (DDX3X) (Homo sapiens (Human)).